A 624-amino-acid chain; its full sequence is Dihydroxy-acid dehydratase (624 aa).

Residue Asp-81 coordinates Mg(2+). Position 122 (Cys-122) interacts with [2Fe-2S] cluster. The Mg(2+) site is built by Asp-123 and Lys-124. Residue Lys-124 is modified to N6-carboxylysine. Cys-195 contacts [2Fe-2S] cluster. Mg(2+) is bound at residue Glu-499. Catalysis depends on Ser-525, which acts as the Proton acceptor.

Belongs to the IlvD/Edd family. Homodimer. [2Fe-2S] cluster is required as a cofactor. Mg(2+) serves as cofactor.

It catalyses the reaction (2R)-2,3-dihydroxy-3-methylbutanoate = 3-methyl-2-oxobutanoate + H2O. It carries out the reaction (2R,3R)-2,3-dihydroxy-3-methylpentanoate = (S)-3-methyl-2-oxopentanoate + H2O. The protein operates within amino-acid biosynthesis; L-isoleucine biosynthesis; L-isoleucine from 2-oxobutanoate: step 3/4. It participates in amino-acid biosynthesis; L-valine biosynthesis; L-valine from pyruvate: step 3/4. In terms of biological role, functions in the biosynthesis of branched-chain amino acids. Catalyzes the dehydration of (2R,3R)-2,3-dihydroxy-3-methylpentanoate (2,3-dihydroxy-3-methylvalerate) into 2-oxo-3-methylpentanoate (2-oxo-3-methylvalerate) and of (2R)-2,3-dihydroxy-3-methylbutanoate (2,3-dihydroxyisovalerate) into 2-oxo-3-methylbutanoate (2-oxoisovalerate), the penultimate precursor to L-isoleucine and L-valine, respectively. This is Dihydroxy-acid dehydratase from Shewanella baltica (strain OS185).